A 224-amino-acid polypeptide reads, in one-letter code: Large ribosomal subunit protein uL3 (224 aa).

Positions 132–153 are disordered; sequence SQTKTHGTHEYQRHPGAIGQRK.

The protein belongs to the universal ribosomal protein uL3 family. In terms of assembly, part of the 50S ribosomal subunit. Forms a cluster with proteins L14 and L19.

Functionally, one of the primary rRNA binding proteins, it binds directly near the 3'-end of the 23S rRNA, where it nucleates assembly of the 50S subunit. The protein is Large ribosomal subunit protein uL3 of Myxococcus xanthus (strain DK1622).